A 342-amino-acid chain; its full sequence is UDP-N-acetylglucosamine--N-acetylmuramyl-(pentapeptide) pyrophosphoryl-undecaprenol N-acetylglucosamine transferase (342 aa).

Residues 10 to 12 (TGG), N124, S177, and Q275 each bind UDP-N-acetyl-alpha-D-glucosamine.

This sequence belongs to the glycosyltransferase 28 family. MurG subfamily.

The protein resides in the cell inner membrane. The catalysed reaction is di-trans,octa-cis-undecaprenyl diphospho-N-acetyl-alpha-D-muramoyl-L-alanyl-D-glutamyl-meso-2,6-diaminopimeloyl-D-alanyl-D-alanine + UDP-N-acetyl-alpha-D-glucosamine = di-trans,octa-cis-undecaprenyl diphospho-[N-acetyl-alpha-D-glucosaminyl-(1-&gt;4)]-N-acetyl-alpha-D-muramoyl-L-alanyl-D-glutamyl-meso-2,6-diaminopimeloyl-D-alanyl-D-alanine + UDP + H(+). It participates in cell wall biogenesis; peptidoglycan biosynthesis. Functionally, cell wall formation. Catalyzes the transfer of a GlcNAc subunit on undecaprenyl-pyrophosphoryl-MurNAc-pentapeptide (lipid intermediate I) to form undecaprenyl-pyrophosphoryl-MurNAc-(pentapeptide)GlcNAc (lipid intermediate II). The chain is UDP-N-acetylglucosamine--N-acetylmuramyl-(pentapeptide) pyrophosphoryl-undecaprenol N-acetylglucosamine transferase from Campylobacter jejuni subsp. jejuni serotype O:6 (strain 81116 / NCTC 11828).